A 61-amino-acid polypeptide reads, in one-letter code: Large ribosomal subunit protein bL32 (61 aa).

It belongs to the bacterial ribosomal protein bL32 family.

The sequence is that of Large ribosomal subunit protein bL32 from Phytoplasma mali (strain AT).